The sequence spans 666 residues: Amyloid beta A4 precursor protein-binding family B member 1-interacting protein (666 aa).

The residue at position 55 (S55) is a Phosphoserine. The tract at residues 122-155 (SQYEDDLPPPPADPVLDLPLPPPPPEPLSQEEEE) is disordered. Residues 129-148 (PPPPADPVLDLPLPPPPPEP) show a composition bias toward pro residues. Residues 176–263 (KKLVVKVHMN…KILFLEKEEK (88 aa)) form the Ras-associating domain. Positions 310 to 419 (VPELEGALYL…WVMGIRIAKY (110 aa)) constitute a PH domain. The segment at 448 to 666 (AAAPAQPSTG…ALQKKRGNVS (219 aa)) is disordered. The segment covering 453 to 478 (QPSTGPKTGTTQPNGQIPQATHSVSA) has biased composition (polar residues). The segment covering 483–504 (AQRHAETSKDKKPALGNHHDPA) has biased composition (basic and acidic residues). S526 is subject to Phosphoserine. T528 is modified (phosphothreonine). Residue S531 is modified to Phosphoserine. Pro residues-rich tracts occupy residues 547–589 (PAPP…PPPS) and 598–631 (LPPP…PVPP).

The protein belongs to the MRL family. In terms of assembly, interacts, through the N-terminal Pro-rich region, with the WW domain of APBB1. Interacts with RAP1A, PFN1, TLN1, VASP, VCL and ENAH. In terms of tissue distribution, widely expressed with high expression in thymus, spleen, lymph node, bone marrow and peripheral leukocytes.

It localises to the cell membrane. The protein localises to the cell projection. It is found in the lamellipodium. Its subcellular location is the cell junction. The protein resides in the focal adhesion. It localises to the cytoplasm. The protein localises to the cytoskeleton. Appears to function in the signal transduction from Ras activation to actin cytoskeletal remodeling. Suppresses insulin-induced promoter activities through AP1 and SRE. Mediates Rap1-induced adhesion. The polypeptide is Amyloid beta A4 precursor protein-binding family B member 1-interacting protein (APBB1IP) (Homo sapiens (Human)).